The chain runs to 634 residues: Sodium-dependent neutral amino acid transporter B(0)AT1 (634 aa).

Residues 1–41 lie on the Cytoplasmic side of the membrane; sequence MVRLVLPNPGLEDRIPSLDELEVIEKEEASSRPKWDNKAQY. A Phosphoserine modification is found at Ser17. The chain crosses the membrane as a helical span at residues 42–62; the sequence is MLTCVGFCVGLGNVWRFPYLC. The Extracellular segment spans residues 63-65; that stretch reads QSH. The helical transmembrane segment at 66–86 threads the bilayer; that stretch reads GGGAFMIPFLILLVLEGIPLL. Residues 87–119 lie on the Cytoplasmic side of the membrane; the sequence is HLEFAIGQRLRKGSVGVWSSIHPALKGVGIASM. A helical transmembrane segment spans residues 120–140; that stretch reads FVSFMVGLYYNTIIAWVMWYF. The Extracellular portion of the chain corresponds to 141 to 192; sequence FNSFQEPLPWSECPLNQNQTGYVEECAKSSSVDYFWYRETLNISTSISDSGS. N-linked (GlcNAc...) asparagine glycosylation is found at Asn158 and Asn182. Residues 193 to 213 traverse the membrane as a helical segment; the sequence is IQWWILLCLTCAWSVLYVCTI. Over 214–221 the chain is Cytoplasmic; it reads RGIETTGK. A helical transmembrane segment spans residues 222–242; the sequence is AVYITSTLPYVVLTIFLIRGL. The Extracellular portion of the chain corresponds to 243–268; the sequence is TLKGATNGIVFLFTPNITELSNPNTW. N-linked (GlcNAc...) asparagine glycosylation occurs at Asn258. A helical membrane pass occupies residues 269–289; that stretch reads LDAGAQVFYSFSLAFGGLISF. The Cytoplasmic portion of the chain corresponds to 290–304; that stretch reads SSYNSVHNNCEMDSV. Residues 305-325 traverse the membrane as a helical segment; that stretch reads IVSIINGFTSVYAATVVYSII. Residues 326–413 lie on the Extracellular side of the membrane; that stretch reads GFRATERFDD…TEAITKMPVS (88 aa). N-linked (GlcNAc...) asparagine glycans are attached at residues Asn354 and Asn368. The chain crosses the membrane as a helical span at residues 414-434; it reads PLWSVLFFIMLFCLGLSSMFG. Residues 435-456 are Cytoplasmic-facing; that stretch reads NMEGVVVPLQDLNITPKKWPKE. The helical transmembrane segment at 457 to 477 threads the bilayer; that stretch reads LLTGLICLGTYLIAFIFTLNS. Over 478–490 the chain is Extracellular; that stretch reads GQYWLSLLDSYAG. Residues 491–511 form a helical membrane-spanning segment; the sequence is SIPLLIIAFCEMFAVVYVYGV. Residues 512-531 lie on the Cytoplasmic side of the membrane; the sequence is DRFNKDIEFMIGHKPNIFWQ. The chain crosses the membrane as a helical span at residues 532–552; the sequence is VTWRVVSPLIMLVIFLFFFVI. Over 553 to 581 the chain is Extracellular; that stretch reads EVNKQLMYSVWDPDYEEFPKSQKVPYPDW. A helical membrane pass occupies residues 582-602; the sequence is VYAVVVIVAGVPCLTIPCFAI. Residues 603–634 lie on the Cytoplasmic side of the membrane; sequence YKLIRNYCQKSGDQHGLVNALSTASVNGDLKN. Position 627 is a phosphoserine (Ser627).

It belongs to the sodium:neurotransmitter symporter (SNF) (TC 2.A.22) family. SLC6A19 subfamily. In terms of assembly, interacts in a tissue-specific manner with ACE2 in small intestine and with CLTRN in the kidney. Interacts with CLTRN; this interaction is required for trafficking of SLC6A19 to the plasma membrane and for its catalytic activation in kidneys. Interacts with ACE2; this interaction is required for trafficking of SLC6A19 to the plasma membrane and for its catalytic activation in intestine. Interacts with ANPEP; the interaction positively regulates its amino acid transporter activity.

Its subcellular location is the membrane. It catalyses the reaction L-alanine(in) + Na(+)(in) = L-alanine(out) + Na(+)(out). It carries out the reaction L-cysteine(in) + Na(+)(in) = L-cysteine(out) + Na(+)(out). The enzyme catalyses L-glutamine(in) + Na(+)(in) = L-glutamine(out) + Na(+)(out). The catalysed reaction is glycine(in) + Na(+)(in) = glycine(out) + Na(+)(out). It catalyses the reaction L-isoleucine(in) + Na(+)(in) = L-isoleucine(out) + Na(+)(out). It carries out the reaction L-leucine(in) + Na(+)(in) = L-leucine(out) + Na(+)(out). The enzyme catalyses L-methionine(in) + Na(+)(in) = L-methionine(out) + Na(+)(out). The catalysed reaction is L-phenylalanine(in) + Na(+)(in) = L-phenylalanine(out) + Na(+)(out). It catalyses the reaction L-serine(in) + Na(+)(in) = L-serine(out) + Na(+)(out). It carries out the reaction L-tryptophan(in) + Na(+)(in) = L-tryptophan(out) + Na(+)(out). The enzyme catalyses L-tyrosine(in) + Na(+)(in) = L-tyrosine(out) + Na(+)(out). The catalysed reaction is L-valine(in) + Na(+)(in) = L-valine(out) + Na(+)(out). Transporter that mediates resorption of neutral amino acids across the apical membrane of renal and intestinal epithelial cells. This uptake is sodium-dependent and chloride-independent. Requires CLTRN in kidney or ACE2 in intestine for cell surface expression and amino acid transporter activity. The polypeptide is Sodium-dependent neutral amino acid transporter B(0)AT1 (Rattus norvegicus (Rat)).